Consider the following 455-residue polypeptide: UDP-N-acetylmuramate--L-alanine ligase (455 aa).

109–115 contributes to the ATP binding site; sequence GTHGKTT.

This sequence belongs to the MurCDEF family.

It is found in the cytoplasm. It catalyses the reaction UDP-N-acetyl-alpha-D-muramate + L-alanine + ATP = UDP-N-acetyl-alpha-D-muramoyl-L-alanine + ADP + phosphate + H(+). The protein operates within cell wall biogenesis; peptidoglycan biosynthesis. Functionally, cell wall formation. The polypeptide is UDP-N-acetylmuramate--L-alanine ligase (Caldicellulosiruptor bescii (strain ATCC BAA-1888 / DSM 6725 / KCTC 15123 / Z-1320) (Anaerocellum thermophilum)).